We begin with the raw amino-acid sequence, 788 residues long: Endonuclease MutS2 (788 aa).

332–339 contacts ATP; it reads GPNTGGKT. The region spanning 713 to 788 is the Smr domain; sequence VDLRGMDAEE…GTGVTVVELK (76 aa).

This sequence belongs to the DNA mismatch repair MutS family. MutS2 subfamily. Homodimer. Binds to stalled ribosomes, contacting rRNA.

In terms of biological role, endonuclease that is involved in the suppression of homologous recombination and thus may have a key role in the control of bacterial genetic diversity. Functionally, acts as a ribosome collision sensor, splitting the ribosome into its 2 subunits. Detects stalled/collided 70S ribosomes which it binds and splits by an ATP-hydrolysis driven conformational change. Acts upstream of the ribosome quality control system (RQC), a ribosome-associated complex that mediates the extraction of incompletely synthesized nascent chains from stalled ribosomes and their subsequent degradation. Probably generates substrates for RQC. In Clostridium botulinum (strain ATCC 19397 / Type A), this protein is Endonuclease MutS2.